The chain runs to 88 residues: Small ribosomal subunit protein bS20 (88 aa).

It belongs to the bacterial ribosomal protein bS20 family.

Its function is as follows. Binds directly to 16S ribosomal RNA. This chain is Small ribosomal subunit protein bS20, found in Methylorubrum extorquens (strain CM4 / NCIMB 13688) (Methylobacterium extorquens).